The sequence spans 1383 residues: DNA-directed RNA polymerase subunit beta (1383 aa).

This sequence belongs to the RNA polymerase beta chain family. As to quaternary structure, the RNAP catalytic core consists of 2 alpha, 1 beta, 1 beta' and 1 omega subunit. When a sigma factor is associated with the core the holoenzyme is formed, which can initiate transcription.

It carries out the reaction RNA(n) + a ribonucleoside 5'-triphosphate = RNA(n+1) + diphosphate. In terms of biological role, DNA-dependent RNA polymerase catalyzes the transcription of DNA into RNA using the four ribonucleoside triphosphates as substrates. This is DNA-directed RNA polymerase subunit beta from Bartonella tribocorum (strain CIP 105476 / IBS 506).